We begin with the raw amino-acid sequence, 404 residues long: Argininosuccinate synthase (404 aa).

Residues 10-18 (AYSGGVDTS) and alanine 38 each bind ATP. An L-citrulline-binding site is contributed by tyrosine 89. Glycine 119 is a binding site for ATP. L-aspartate is bound by residues threonine 121, asparagine 125, and aspartate 126. Asparagine 125 is a binding site for L-citrulline. Positions 129, 177, 186, 262, and 274 each coordinate L-citrulline.

Belongs to the argininosuccinate synthase family. Type 1 subfamily. Homotetramer.

The protein localises to the cytoplasm. It carries out the reaction L-citrulline + L-aspartate + ATP = 2-(N(omega)-L-arginino)succinate + AMP + diphosphate + H(+). It functions in the pathway amino-acid biosynthesis; L-arginine biosynthesis; L-arginine from L-ornithine and carbamoyl phosphate: step 2/3. The chain is Argininosuccinate synthase from Prochlorococcus marinus (strain MIT 9215).